Reading from the N-terminus, the 591-residue chain is Aspartate--tRNA(Asp/Asn) ligase (591 aa).

E174 is a binding site for L-aspartate. The interval 198-201 (QLFK) is aspartate. R220 is a binding site for L-aspartate. ATP is bound by residues 220-222 (RDE) and Q229. L-aspartate is bound at residue H450. Position 483 (E483) interacts with ATP. R490 serves as a coordination point for L-aspartate. 535-538 (GLDR) serves as a coordination point for ATP.

This sequence belongs to the class-II aminoacyl-tRNA synthetase family. Type 1 subfamily. Homodimer.

It is found in the cytoplasm. The catalysed reaction is tRNA(Asx) + L-aspartate + ATP = L-aspartyl-tRNA(Asx) + AMP + diphosphate. Aspartyl-tRNA synthetase with relaxed tRNA specificity since it is able to aspartylate not only its cognate tRNA(Asp) but also tRNA(Asn). Reaction proceeds in two steps: L-aspartate is first activated by ATP to form Asp-AMP and then transferred to the acceptor end of tRNA(Asp/Asn). This chain is Aspartate--tRNA(Asp/Asn) ligase, found in Pseudomonas putida (strain GB-1).